A 126-amino-acid chain; its full sequence is MPTISQLVRKGRKTVASKSTAPALKECPQKRGVCTVVKTTTPKKPNSALRKIARVRLTNGYEVTAYIPGVGHNLQEHSVVLIRGGRVKDLPGVRYHIVRGALDSAGVANRMQGRSKYGAKKPKQKK.

The tract at residues 1–23 (MPTISQLVRKGRKTVASKSTAPA) is disordered. Asp-89 is subject to 3-methylthioaspartic acid.

It belongs to the universal ribosomal protein uS12 family. Part of the 30S ribosomal subunit. Contacts proteins S8 and S17. May interact with IF1 in the 30S initiation complex.

Functionally, with S4 and S5 plays an important role in translational accuracy. In terms of biological role, interacts with and stabilizes bases of the 16S rRNA that are involved in tRNA selection in the A site and with the mRNA backbone. Located at the interface of the 30S and 50S subunits, it traverses the body of the 30S subunit contacting proteins on the other side and probably holding the rRNA structure together. The combined cluster of proteins S8, S12 and S17 appears to hold together the shoulder and platform of the 30S subunit. This chain is Small ribosomal subunit protein uS12, found in Clostridium perfringens (strain ATCC 13124 / DSM 756 / JCM 1290 / NCIMB 6125 / NCTC 8237 / Type A).